We begin with the raw amino-acid sequence, 295 residues long: Pyridoxal 5'-phosphate synthase subunit PdxS (295 aa).

D-ribose 5-phosphate is bound at residue aspartate 25. Lysine 82 acts as the Schiff-base intermediate with D-ribose 5-phosphate in catalysis. Glycine 154 is a D-ribose 5-phosphate binding site. Arginine 166 is a binding site for D-glyceraldehyde 3-phosphate. D-ribose 5-phosphate is bound by residues glycine 215 and 236–237; that span reads GS.

The protein belongs to the PdxS/SNZ family. In terms of assembly, in the presence of PdxT, forms a dodecamer of heterodimers.

The enzyme catalyses aldehydo-D-ribose 5-phosphate + D-glyceraldehyde 3-phosphate + L-glutamine = pyridoxal 5'-phosphate + L-glutamate + phosphate + 3 H2O + H(+). The protein operates within cofactor biosynthesis; pyridoxal 5'-phosphate biosynthesis. In terms of biological role, catalyzes the formation of pyridoxal 5'-phosphate from ribose 5-phosphate (RBP), glyceraldehyde 3-phosphate (G3P) and ammonia. The ammonia is provided by the PdxT subunit. Can also use ribulose 5-phosphate and dihydroxyacetone phosphate as substrates, resulting from enzyme-catalyzed isomerization of RBP and G3P, respectively. The polypeptide is Pyridoxal 5'-phosphate synthase subunit PdxS (Actinobacillus pleuropneumoniae serotype 5b (strain L20)).